A 314-amino-acid polypeptide reads, in one-letter code: Putative lipoprotein LppW (314 aa).

A signal peptide spans 1–22 (MRARPLTLLTALAAVTLVVVAG). C23 carries N-palmitoyl cysteine lipidation. A lipid anchor (S-diacylglycerol cysteine) is attached at C23.

The protein resides in the cell membrane. The chain is Putative lipoprotein LppW (lppW) from Mycobacterium bovis (strain ATCC BAA-935 / AF2122/97).